The sequence spans 342 residues: S-adenosylmethionine:tRNA ribosyltransferase-isomerase (342 aa).

It belongs to the QueA family. As to quaternary structure, monomer.

It localises to the cytoplasm. It carries out the reaction 7-aminomethyl-7-carbaguanosine(34) in tRNA + S-adenosyl-L-methionine = epoxyqueuosine(34) in tRNA + adenine + L-methionine + 2 H(+). Its pathway is tRNA modification; tRNA-queuosine biosynthesis. Functionally, transfers and isomerizes the ribose moiety from AdoMet to the 7-aminomethyl group of 7-deazaguanine (preQ1-tRNA) to give epoxyqueuosine (oQ-tRNA). This chain is S-adenosylmethionine:tRNA ribosyltransferase-isomerase, found in Streptococcus pyogenes serotype M2 (strain MGAS10270).